An 81-amino-acid polypeptide reads, in one-letter code: Photosystem I iron-sulfur center (81 aa).

4Fe-4S ferredoxin-type domains follow at residues 2–31 and 39–68; these read SHSV…MIPW and IAPA…VRVY. 8 residues coordinate [4Fe-4S] cluster: Cys11, Cys14, Cys17, Cys21, Cys48, Cys51, Cys54, and Cys58.

The eukaryotic PSI reaction center is composed of at least 11 subunits. [4Fe-4S] cluster is required as a cofactor.

It is found in the plastid. The protein resides in the chloroplast thylakoid membrane. It carries out the reaction reduced [plastocyanin] + hnu + oxidized [2Fe-2S]-[ferredoxin] = oxidized [plastocyanin] + reduced [2Fe-2S]-[ferredoxin]. Apoprotein for the two 4Fe-4S centers FA and FB of photosystem I (PSI); essential for photochemical activity. FB is the terminal electron acceptor of PSI, donating electrons to ferredoxin. The C-terminus interacts with PsaA/B/D and helps assemble the protein into the PSI complex. Required for binding of PsaD and PsaE to PSI. PSI is a plastocyanin-ferredoxin oxidoreductase, converting photonic excitation into a charge separation, which transfers an electron from the donor P700 chlorophyll pair to the spectroscopically characterized acceptors A0, A1, FX, FA and FB in turn. This is Photosystem I iron-sulfur center from Chloranthus spicatus (Chulantree).